Here is a 156-residue protein sequence, read N- to C-terminus: 2-C-methyl-D-erythritol 2,4-cyclodiphosphate synthase (156 aa).

A divalent metal cation is bound by residues Asp-8 and His-10. 4-CDP-2-C-methyl-D-erythritol 2-phosphate-binding positions include 8-10 (DVH) and 34-35 (HS). His-42 serves as a coordination point for a divalent metal cation. Residues 56 to 58 (DIG), 61 to 65 (FPDTD), 100 to 106 (AQRPKMA), 132 to 135 (TTEE), and Phe-139 each bind 4-CDP-2-C-methyl-D-erythritol 2-phosphate.

Belongs to the IspF family. In terms of assembly, homotrimer. It depends on a divalent metal cation as a cofactor.

The catalysed reaction is 4-CDP-2-C-methyl-D-erythritol 2-phosphate = 2-C-methyl-D-erythritol 2,4-cyclic diphosphate + CMP. It functions in the pathway isoprenoid biosynthesis; isopentenyl diphosphate biosynthesis via DXP pathway; isopentenyl diphosphate from 1-deoxy-D-xylulose 5-phosphate: step 4/6. In terms of biological role, involved in the biosynthesis of isopentenyl diphosphate (IPP) and dimethylallyl diphosphate (DMAPP), two major building blocks of isoprenoid compounds. Catalyzes the conversion of 4-diphosphocytidyl-2-C-methyl-D-erythritol 2-phosphate (CDP-ME2P) to 2-C-methyl-D-erythritol 2,4-cyclodiphosphate (ME-CPP) with a corresponding release of cytidine 5-monophosphate (CMP). This is 2-C-methyl-D-erythritol 2,4-cyclodiphosphate synthase from Clostridium perfringens (strain ATCC 13124 / DSM 756 / JCM 1290 / NCIMB 6125 / NCTC 8237 / Type A).